The primary structure comprises 76 residues: Rhesus theta defensin-1/2 subunit B (76 aa).

Residues 1-22 (MRTFALLTAMLLLVALHAQAEA) form the signal peptide. Residues 23–64 (RQARADEAAAQQQPGADDQGMAHSFTRPENAALPLSESARGL) constitute a propeptide that is removed on maturation. Positions 25-54 (ARADEAAAQQQPGADDQGMAHSFTRPENAA) are disordered. Positions 30-44 (AAAQQQPGADDQGMA) are enriched in low complexity. Arg65 participates in a covalent cross-link: Cyclopeptide (Arg-Cys) (interchain with C-73 in subunit A); in form RTD-1. Residue Arg65 forms a Cyclopeptide (Arg-Cys) (interchain with C-73 in subunit B); in form RTD-2 linkage. A disulfide bridge links Cys68 with Cys73. Cys73 is covalently cross-linked (Cyclopeptide (Cys-Arg) (interchain with R-65 in subunit A); in form RTD-1). Cys73 participates in a covalent cross-link: Cyclopeptide (Cys-Arg) (interchain with R-65 in subunit B); in form RTD-2. The propeptide occupies 74–76 (QLL).

This sequence belongs to the alpha-defensin family. Theta subfamily. In terms of assembly, RTD-1 is a cyclic heterodimer composed of subunits A and B; disulfide-linked. RTD-2 is a cyclic homodimer composed of two subunits B; disulfide-linked. Forms a cyclic peptide with 1 subunit B (RTD-2) or with 1 subunit A (RTD-1). An additional intersubunit disulfide bond is formed. In terms of tissue distribution, RTD-1 is expressed in bone marrow. Detected in promyelocytes, myelocytes and mature neutrophils and monocytes.

Functionally, RTD-1 and RTD-2 have similar antimicrobial activities against the Gram-positive bacteria S.aureus 502A and L.monocytogenes, the Gram-negative bacterium S.typhimurium, and the fungi C.albicans 16820 and C.neoformans 271A. RTD-2 is 2-3-fold less active than RTD-1 against E.coli ML35. The protein is Rhesus theta defensin-1/2 subunit B (RTD1B) of Macaca mulatta (Rhesus macaque).